Here is a 213-residue protein sequence, read N- to C-terminus: ATP phosphoribosyltransferase (213 aa).

It belongs to the ATP phosphoribosyltransferase family. Short subfamily. In terms of assembly, heteromultimer composed of HisG and HisZ subunits.

The protein localises to the cytoplasm. The catalysed reaction is 1-(5-phospho-beta-D-ribosyl)-ATP + diphosphate = 5-phospho-alpha-D-ribose 1-diphosphate + ATP. Its pathway is amino-acid biosynthesis; L-histidine biosynthesis; L-histidine from 5-phospho-alpha-D-ribose 1-diphosphate: step 1/9. Catalyzes the condensation of ATP and 5-phosphoribose 1-diphosphate to form N'-(5'-phosphoribosyl)-ATP (PR-ATP). Has a crucial role in the pathway because the rate of histidine biosynthesis seems to be controlled primarily by regulation of HisG enzymatic activity. This is ATP phosphoribosyltransferase from Variovorax paradoxus (strain S110).